A 257-amino-acid polypeptide reads, in one-letter code: Isoprenyl transferase (257 aa).

D37 is an active-site residue. D37 provides a ligand contact to Mg(2+). Substrate-binding positions include G38 to R41, W42, R50, H54, and S82 to E84. N85 (proton acceptor) is an active-site residue. Residues W86, R88, R205, and R211–S213 each bind substrate. Residue E224 coordinates Mg(2+).

It belongs to the UPP synthase family. In terms of assembly, homodimer. Mg(2+) is required as a cofactor.

Functionally, catalyzes the condensation of isopentenyl diphosphate (IPP) with allylic pyrophosphates generating different type of terpenoids. The protein is Isoprenyl transferase of Shouchella clausii (strain KSM-K16) (Alkalihalobacillus clausii).